A 276-amino-acid chain; its full sequence is F-box/LRR-repeat protein 20 (276 aa).

The region spanning 22–68 (AVINKKLPKELLLRIFSFLDVVTLCRCAQVSRAWNVLALDGSNWQRI) is the F-box domain. LRR repeat units lie at residues 74–100 (QRDIEGRVVENISKRCGGFLRKLSLRG), 101–126 (CLGVGDNALRTFAQNCRNIEVLSLNG), 127–152 (CTKTTDATCTSLSKFCSKLRHLDLAS), 153–178 (CTSITNMSLKALSEGCPLLEQLNISW), 179–204 (CDQVTKDGIQALVRGCGGLKALFLKG), 205–230 (CTQLEDEALKYIGAHCPELVTLNLQT), 231–256 (CLQITDEGLITICRGCHKLQSLCASG), and 257–276 (CSNITDAILNALGQNCPRLR).

In terms of assembly, interacts with SKP1 and CUL1. Widely expressed, with highest expression in skeletal muscle, heart and brain.

The protein resides in the cytoplasm. Substrate-recognition component of the SCF (SKP1-CUL1-F-box protein)-type E3 ubiquitin ligase complex. Role in neural transmission. The polypeptide is F-box/LRR-repeat protein 20 (Fbxl20) (Rattus norvegicus (Rat)).